A 307-amino-acid chain; its full sequence is tRNA dimethylallyltransferase (307 aa).

Residue 10-17 participates in ATP binding; it reads GPTAVGKT. 12–17 contacts substrate; that stretch reads TAVGKT. The interval 35–38 is interaction with substrate tRNA; that stretch reads DSMQ.

This sequence belongs to the IPP transferase family. Monomer. The cofactor is Mg(2+).

It catalyses the reaction adenosine(37) in tRNA + dimethylallyl diphosphate = N(6)-dimethylallyladenosine(37) in tRNA + diphosphate. Its function is as follows. Catalyzes the transfer of a dimethylallyl group onto the adenine at position 37 in tRNAs that read codons beginning with uridine, leading to the formation of N6-(dimethylallyl)adenosine (i(6)A). This is tRNA dimethylallyltransferase from Ligilactobacillus salivarius (strain UCC118) (Lactobacillus salivarius).